The following is a 318-amino-acid chain: GTP cyclohydrolase MptA (318 aa).

This sequence belongs to the GTP cyclohydrolase IV family. Homodimer. Fe(2+) is required as a cofactor.

It carries out the reaction GTP + H2O = 7,8-dihydroneopterin 2',3'-cyclic phosphate + formate + diphosphate + H(+). It participates in cofactor biosynthesis; 5,6,7,8-tetrahydromethanopterin biosynthesis. In terms of biological role, converts GTP to 7,8-dihydro-D-neopterin 2',3'-cyclic phosphate, the first intermediate in the biosynthesis of coenzyme methanopterin. The chain is GTP cyclohydrolase MptA from Methanosarcina mazei (strain ATCC BAA-159 / DSM 3647 / Goe1 / Go1 / JCM 11833 / OCM 88) (Methanosarcina frisia).